We begin with the raw amino-acid sequence, 283 residues long: uncharacterized protein (283 aa).

N-linked (GlcNAc...) asparagine glycosylation is present at asparagine 15. Residues 15-81 form the PQ-loop 1 domain; it reads NATASTVFAI…QELNIALKVQ (67 aa). 6 helical membrane-spanning segments follow: residues 19-39, 48-68, 108-128, 138-158, 170-190, and 206-226; these read STVF…PQII, EGLD…LSVY, ALFV…MLIL, VEWP…IGFL, VTGI…FSFL, and GLLF…NVLL. Residues 149–204 enclose the PQ-loop 2 domain; the sequence is ATVLVNIGFLPQYISIFRARAVTGISYLFLAIDSSGSLFSFLSLPFDRWDVLAAVD. N-linked (GlcNAc...) asparagine glycosylation occurs at asparagine 228.

The protein localises to the membrane. This is an uncharacterized protein from Schizosaccharomyces pombe (strain 972 / ATCC 24843) (Fission yeast).